Reading from the N-terminus, the 382-residue chain is Queuine tRNA-ribosyltransferase (382 aa).

Catalysis depends on D96, which acts as the Proton acceptor. Substrate is bound by residues 96-100 (DSGGF), D151, Q194, and G221. Residues 252-258 (GVGAPDS) are RNA binding. D271 (nucleophile) is an active-site residue. The segment at 276–280 (TRIAR) is RNA binding; important for wobble base 34 recognition. Zn(2+)-binding residues include C309, C311, C314, and H340.

The protein belongs to the queuine tRNA-ribosyltransferase family. In terms of assembly, homodimer. Within each dimer, one monomer is responsible for RNA recognition and catalysis, while the other monomer binds to the replacement base PreQ1. Requires Zn(2+) as cofactor.

The catalysed reaction is 7-aminomethyl-7-carbaguanine + guanosine(34) in tRNA = 7-aminomethyl-7-carbaguanosine(34) in tRNA + guanine. The protein operates within tRNA modification; tRNA-queuosine biosynthesis. Functionally, catalyzes the base-exchange of a guanine (G) residue with the queuine precursor 7-aminomethyl-7-deazaguanine (PreQ1) at position 34 (anticodon wobble position) in tRNAs with GU(N) anticodons (tRNA-Asp, -Asn, -His and -Tyr). Catalysis occurs through a double-displacement mechanism. The nucleophile active site attacks the C1' of nucleotide 34 to detach the guanine base from the RNA, forming a covalent enzyme-RNA intermediate. The proton acceptor active site deprotonates the incoming PreQ1, allowing a nucleophilic attack on the C1' of the ribose to form the product. After dissociation, two additional enzymatic reactions on the tRNA convert PreQ1 to queuine (Q), resulting in the hypermodified nucleoside queuosine (7-(((4,5-cis-dihydroxy-2-cyclopenten-1-yl)amino)methyl)-7-deazaguanosine). The protein is Queuine tRNA-ribosyltransferase of Lactococcus lactis subsp. cremoris (strain MG1363).